We begin with the raw amino-acid sequence, 639 residues long: PTS-dependent dihydroxyacetone kinase operon regulatory protein (639 aa).

Positions 1-318 are sensor domain; that stretch reads MSGAFNNDGR…MRQLMTSQLG (318 aa). Residues 52–189 enclose the GAF domain; sequence AMLTLGQAAL…AIAREVGNLL (138 aa). A PAS domain is found at 203–265; that stretch reads NQLNALLESM…AVLQQAIKQA (63 aa). The region spanning 327-552 is the Sigma-54 factor interaction domain; sequence MPQDDPQTRR…LYSVIENLAL (226 aa). ATP is bound by residues 355–362 and 415–424; these read GEEGVGKA and AHGGTLFLEK.

Homodimer. DhaR forms complexes with DhaK and DhaL-ADP.

Functionally, positively regulates the dhaKLM operon from a sigma-70 promoter. Represses its own expression. The protein is PTS-dependent dihydroxyacetone kinase operon regulatory protein of Escherichia coli (strain K12).